Reading from the N-terminus, the 286-residue chain is Polygalacturonan/rhamnogalacturonan transport system permease protein YtcP (286 aa).

6 helical membrane passes run 9 to 29 (LIYG…IHVI), 69 to 89 (LLVS…LSSL), 106 to 126 (MFLV…FLVV), 131 to 151 (LLDS…NLII), 176 to 196 (GIFF…ISLF), and 251 to 271 (TIKM…YPFI). The 203-residue stretch at 69 to 271 (LLVSVFVTVI…IPVLLVYPFI (203 aa)) folds into the ABC transmembrane type-1 domain.

The protein belongs to the binding-protein-dependent transport system permease family. CysTW subfamily. In terms of assembly, the complex is probably composed of two ATP-binding proteins (MsmX), two transmembrane proteins (YtcP and YteP) and a solute-binding protein (YtcQ).

It is found in the cell membrane. Involved in pectin degradation. Part of the ABC transporter complex YtcQP-YteP involved in the uptake of polygalacturonan and rhamnogalacturonan type I. Responsible for the translocation of the substrate across the membrane. The polypeptide is Polygalacturonan/rhamnogalacturonan transport system permease protein YtcP (ytcP) (Bacillus subtilis (strain 168)).